A 328-amino-acid chain; its full sequence is Methionyl-tRNA formyltransferase (328 aa).

A (6S)-5,6,7,8-tetrahydrofolate-binding site is contributed by 110-113; it reads SLLP.

It belongs to the Fmt family.

The catalysed reaction is L-methionyl-tRNA(fMet) + (6R)-10-formyltetrahydrofolate = N-formyl-L-methionyl-tRNA(fMet) + (6S)-5,6,7,8-tetrahydrofolate + H(+). Functionally, attaches a formyl group to the free amino group of methionyl-tRNA(fMet). The formyl group appears to play a dual role in the initiator identity of N-formylmethionyl-tRNA by promoting its recognition by IF2 and preventing the misappropriation of this tRNA by the elongation apparatus. The sequence is that of Methionyl-tRNA formyltransferase from Prochlorococcus marinus (strain AS9601).